A 406-amino-acid polypeptide reads, in one-letter code: Cysteine desulfurase (406 aa).

An N6-(pyridoxal phosphate)lysine modification is found at Lys-226. The active-site Cysteine persulfide intermediate is the Cys-364.

The protein belongs to the class-V pyridoxal-phosphate-dependent aminotransferase family. Csd subfamily. Homodimer. Interacts with SufE and the SufBCD complex composed of SufB, SufC and SufD. The interaction with SufE is required to mediate the direct transfer of the sulfur atom from the S-sulfanylcysteine. The cofactor is pyridoxal 5'-phosphate.

It is found in the cytoplasm. The catalysed reaction is (sulfur carrier)-H + L-cysteine = (sulfur carrier)-SH + L-alanine. It carries out the reaction L-selenocysteine + AH2 = hydrogenselenide + L-alanine + A + H(+). It functions in the pathway cofactor biosynthesis; iron-sulfur cluster biosynthesis. Cysteine desulfurases mobilize the sulfur from L-cysteine to yield L-alanine, an essential step in sulfur metabolism for biosynthesis of a variety of sulfur-containing biomolecules. Component of the suf operon, which is activated and required under specific conditions such as oxidative stress and iron limitation. Acts as a potent selenocysteine lyase in vitro, that mobilizes selenium from L-selenocysteine. Selenocysteine lyase activity is however unsure in vivo. The protein is Cysteine desulfurase of Escherichia coli O127:H6 (strain E2348/69 / EPEC).